The following is a 616-amino-acid chain: Dihydroxy-acid dehydratase (616 aa).

Asp-81 contributes to the Mg(2+) binding site. Cys-122 is a [2Fe-2S] cluster binding site. Mg(2+) contacts are provided by Asp-123 and Lys-124. Lys-124 is subject to N6-carboxylysine. Cys-195 contributes to the [2Fe-2S] cluster binding site. Residue Glu-491 participates in Mg(2+) binding. The active-site Proton acceptor is Ser-517.

The protein belongs to the IlvD/Edd family. Homodimer. Requires [2Fe-2S] cluster as cofactor. The cofactor is Mg(2+).

It catalyses the reaction (2R)-2,3-dihydroxy-3-methylbutanoate = 3-methyl-2-oxobutanoate + H2O. It carries out the reaction (2R,3R)-2,3-dihydroxy-3-methylpentanoate = (S)-3-methyl-2-oxopentanoate + H2O. Its pathway is amino-acid biosynthesis; L-isoleucine biosynthesis; L-isoleucine from 2-oxobutanoate: step 3/4. The protein operates within amino-acid biosynthesis; L-valine biosynthesis; L-valine from pyruvate: step 3/4. In terms of biological role, functions in the biosynthesis of branched-chain amino acids. Catalyzes the dehydration of (2R,3R)-2,3-dihydroxy-3-methylpentanoate (2,3-dihydroxy-3-methylvalerate) into 2-oxo-3-methylpentanoate (2-oxo-3-methylvalerate) and of (2R)-2,3-dihydroxy-3-methylbutanoate (2,3-dihydroxyisovalerate) into 2-oxo-3-methylbutanoate (2-oxoisovalerate), the penultimate precursor to L-isoleucine and L-valine, respectively. In Escherichia coli O1:K1 / APEC, this protein is Dihydroxy-acid dehydratase.